The following is a 228-amino-acid chain: Urease accessory protein UreF (228 aa).

The protein belongs to the UreF family. UreD, UreF and UreG form a complex that acts as a GTP-hydrolysis-dependent molecular chaperone, activating the urease apoprotein by helping to assemble the nickel containing metallocenter of UreC. The UreE protein probably delivers the nickel.

It is found in the cytoplasm. Functionally, required for maturation of urease via the functional incorporation of the urease nickel metallocenter. In Prochlorococcus marinus subsp. pastoris (strain CCMP1986 / NIES-2087 / MED4), this protein is Urease accessory protein UreF.